We begin with the raw amino-acid sequence, 390 residues long: Succinyl-diaminopimelate desuccinylase (390 aa).

Histidine 74 lines the Zn(2+) pocket. Aspartate 76 is a catalytic residue. Position 107 (aspartate 107) interacts with Zn(2+). Glutamate 140 serves as the catalytic Proton acceptor. 3 residues coordinate Zn(2+): glutamate 141, glutamate 169, and histidine 363.

Belongs to the peptidase M20A family. DapE subfamily. Homodimer. The cofactor is Zn(2+). Co(2+) serves as cofactor.

It catalyses the reaction N-succinyl-(2S,6S)-2,6-diaminopimelate + H2O = (2S,6S)-2,6-diaminopimelate + succinate. The protein operates within amino-acid biosynthesis; L-lysine biosynthesis via DAP pathway; LL-2,6-diaminopimelate from (S)-tetrahydrodipicolinate (succinylase route): step 3/3. Its function is as follows. Catalyzes the hydrolysis of N-succinyl-L,L-diaminopimelic acid (SDAP), forming succinate and LL-2,6-diaminopimelate (DAP), an intermediate involved in the bacterial biosynthesis of lysine and meso-diaminopimelic acid, an essential component of bacterial cell walls. The sequence is that of Succinyl-diaminopimelate desuccinylase from Bartonella quintana (strain Toulouse) (Rochalimaea quintana).